The following is a 409-amino-acid chain: NADH-quinone oxidoreductase subunit D (409 aa).

This sequence belongs to the complex I 49 kDa subunit family. NDH-1 is composed of 14 different subunits. Subunits NuoB, C, D, E, F, and G constitute the peripheral sector of the complex.

The protein resides in the cell inner membrane. The catalysed reaction is a quinone + NADH + 5 H(+)(in) = a quinol + NAD(+) + 4 H(+)(out). NDH-1 shuttles electrons from NADH, via FMN and iron-sulfur (Fe-S) centers, to quinones in the respiratory chain. The immediate electron acceptor for the enzyme in this species is believed to be ubiquinone. Couples the redox reaction to proton translocation (for every two electrons transferred, four hydrogen ions are translocated across the cytoplasmic membrane), and thus conserves the redox energy in a proton gradient. In Helicobacter pylori (strain G27), this protein is NADH-quinone oxidoreductase subunit D.